Consider the following 198-residue polypeptide: Clytin (198 aa).

A propeptide spanning residues M1–A9 is cleaved from the precursor. EF-hand domains lie at K20–A55, T60–W95, E119–C148, and S149–T184. Ca(2+)-binding residues include D33, N35, D37, K39, and E44. Ca(2+) contacts are provided by D126, D128, S130, S132, E137, D162, D164, S166, K168, and E173.

Belongs to the aequorin family.

Functionally, ca(2+)-dependent bioluminescence photoprotein. Displays an emission peak at 470 nm (blue light). Trace amounts of calcium ion trigger the intramolecular oxidation of the chromophore, coelenterazine into coelenteramide and CO(2) with the concomitant emission of light. In Clytia gregaria (Gregarious jellyfish), this protein is Clytin.